Consider the following 227-residue polypeptide: UPF0758 protein CPF_2399 (227 aa).

The MPN domain occupies Lys-105 to Leu-227. Residues His-176, His-178, and Asp-189 each contribute to the Zn(2+) site. A JAMM motif motif is present at residues His-176–Asp-189.

The protein belongs to the UPF0758 family.

The protein is UPF0758 protein CPF_2399 of Clostridium perfringens (strain ATCC 13124 / DSM 756 / JCM 1290 / NCIMB 6125 / NCTC 8237 / Type A).